Reading from the N-terminus, the 345-residue chain is UDP-3-O-acylglucosamine N-acyltransferase (345 aa).

Catalysis depends on His239, which acts as the Proton acceptor.

This sequence belongs to the transferase hexapeptide repeat family. LpxD subfamily. Homotrimer.

It carries out the reaction a UDP-3-O-[(3R)-3-hydroxyacyl]-alpha-D-glucosamine + a (3R)-hydroxyacyl-[ACP] = a UDP-2-N,3-O-bis[(3R)-3-hydroxyacyl]-alpha-D-glucosamine + holo-[ACP] + H(+). It functions in the pathway bacterial outer membrane biogenesis; LPS lipid A biosynthesis. In terms of biological role, catalyzes the N-acylation of UDP-3-O-acylglucosamine using 3-hydroxyacyl-ACP as the acyl donor. Is involved in the biosynthesis of lipid A, a phosphorylated glycolipid that anchors the lipopolysaccharide to the outer membrane of the cell. The chain is UDP-3-O-acylglucosamine N-acyltransferase from Geobacter metallireducens (strain ATCC 53774 / DSM 7210 / GS-15).